Consider the following 187-residue polypeptide: NAC domain-containing protein 104 (187 aa).

One can recognise an NAC domain in the interval 3–155 (LPPGFRFFPT…KWVICRVYEQ (153 aa)). A DNA-binding region spans residues 94–161 (VGIKKYLTFY…VYEQNCSEEE (68 aa)). Residues 118–142 (LPDSSSSSSRSSKRSSRASSSSHKP) form a disordered region.

As to expression, expressed in root xylem vessels. Expressed in stems, vascular tissue of cauline leaves and tracheary elements of sepals.

It is found in the nucleus. In terms of biological role, probable transcription factor that influences tracheary elements and xylem development by negatively regulating secondary cell wall fiber synthesis and programmed cell death. In Arabidopsis thaliana (Mouse-ear cress), this protein is NAC domain-containing protein 104.